Consider the following 870-residue polypeptide: Alanine--tRNA ligase (870 aa).

Positions 585, 589, 689, and 693 each coordinate Zn(2+).

Belongs to the class-II aminoacyl-tRNA synthetase family. Zn(2+) serves as cofactor.

The protein localises to the cytoplasm. It carries out the reaction tRNA(Ala) + L-alanine + ATP = L-alanyl-tRNA(Ala) + AMP + diphosphate. In terms of biological role, catalyzes the attachment of alanine to tRNA(Ala) in a two-step reaction: alanine is first activated by ATP to form Ala-AMP and then transferred to the acceptor end of tRNA(Ala). Also edits incorrectly charged Ser-tRNA(Ala) and Gly-tRNA(Ala) via its editing domain. This chain is Alanine--tRNA ligase, found in Picrophilus torridus (strain ATCC 700027 / DSM 9790 / JCM 10055 / NBRC 100828 / KAW 2/3).